The following is a 1399-amino-acid chain: DNA-directed RNA polymerase subunit beta' (1399 aa).

4 residues coordinate Zn(2+): Cys-71, Cys-73, Cys-86, and Cys-89. The Mg(2+) site is built by Asp-462, Asp-464, and Asp-466. Residues Cys-810, Cys-884, Cys-891, and Cys-894 each contribute to the Zn(2+) site. The segment at 1379–1399 is disordered; sequence KQAAIVPSQPEPQPLALPPAE. The span at 1387-1399 shows a compositional bias: pro residues; sequence QPEPQPLALPPAE.

It belongs to the RNA polymerase beta' chain family. In terms of assembly, the RNAP catalytic core consists of 2 alpha, 1 beta, 1 beta' and 1 omega subunit. When a sigma factor is associated with the core the holoenzyme is formed, which can initiate transcription. The cofactor is Mg(2+). It depends on Zn(2+) as a cofactor.

The catalysed reaction is RNA(n) + a ribonucleoside 5'-triphosphate = RNA(n+1) + diphosphate. Functionally, DNA-dependent RNA polymerase catalyzes the transcription of DNA into RNA using the four ribonucleoside triphosphates as substrates. The sequence is that of DNA-directed RNA polymerase subunit beta' from Bradyrhizobium sp. (strain BTAi1 / ATCC BAA-1182).